A 988-amino-acid chain; its full sequence is DExH-box ATP-dependent RNA helicase DExH9 (988 aa).

Positions 1–27 are disordered; sequence MGSVKRKSVEESSDSAPPQKVQREDDS. The 157-residue stretch at 76-232 folds into the Helicase ATP-binding domain; that stretch reads IKCLDNGESV…WVAKVHQQPC (157 aa). 89-96 contributes to the ATP binding site; the sequence is AHTSAGKT. Positions 180–183 match the DEVH box motif; that stretch reads DEVH. Positions 307-509 constitute a Helicase C-terminal domain; that stretch reads DIFKLVKMII…SYNMLLNQLR (203 aa).

The protein belongs to the DExH box helicase family. SKI2 subfamily. In terms of tissue distribution, ubiquitous but preferentially expressed in active tissues.

The protein localises to the nucleus. It is found in the nucleolus. It carries out the reaction ATP + H2O = ADP + phosphate + H(+). Its function is as follows. ATP-dependent RNA helicase that associates with the RNA exosome complex. Required for proper rRNA biogenesis and development. Involved in the 3'-processing of the 7S pre-RNA to the mature 5.8S rRNA and also in the removal of rRNA maturation by-products. This chain is DExH-box ATP-dependent RNA helicase DExH9, found in Arabidopsis thaliana (Mouse-ear cress).